The primary structure comprises 307 residues: Phosphonates import ATP-binding protein PhnC (307 aa).

One can recognise an ABC transporter domain in the interval 4-252; it reads IRIERLSKTF…RLHALYGDDA (249 aa). 37–44 contributes to the ATP binding site; that stretch reads GASGSGKS. The span at 265–275 shows a compositional bias: basic and acidic residues; the sequence is AAREAAGEPAR. Positions 265-307 are disordered; sequence AAREAAGEPARRAPAAFDSAGSPDLPDSQPASPRRMLAASSMR.

The protein belongs to the ABC transporter superfamily. Phosphonates importer (TC 3.A.1.9.1) family. As to quaternary structure, the complex is composed of two ATP-binding proteins (PhnC), two transmembrane proteins (PhnE) and a solute-binding protein (PhnD).

The protein resides in the cell inner membrane. The enzyme catalyses phosphonate(out) + ATP + H2O = phosphonate(in) + ADP + phosphate + H(+). In terms of biological role, part of the ABC transporter complex PhnCDE involved in phosphonates import. Responsible for energy coupling to the transport system. The chain is Phosphonates import ATP-binding protein PhnC from Burkholderia pseudomallei (strain 1710b).